The primary structure comprises 72 residues: Translation initiation factor IF-1 2 (72 aa).

An S1-like domain is found at 1–72; that stretch reads MAKDDVIQMQ…SRARIVFRTK (72 aa).

It belongs to the IF-1 family. As to quaternary structure, component of the 30S ribosomal translation pre-initiation complex which assembles on the 30S ribosome in the order IF-2 and IF-3, IF-1 and N-formylmethionyl-tRNA(fMet); mRNA recruitment can occur at any time during PIC assembly.

Its subcellular location is the cytoplasm. Its function is as follows. One of the essential components for the initiation of protein synthesis. Stabilizes the binding of IF-2 and IF-3 on the 30S subunit to which N-formylmethionyl-tRNA(fMet) subsequently binds. Helps modulate mRNA selection, yielding the 30S pre-initiation complex (PIC). Upon addition of the 50S ribosomal subunit IF-1, IF-2 and IF-3 are released leaving the mature 70S translation initiation complex. The sequence is that of Translation initiation factor IF-1 2 from Cupriavidus necator (strain ATCC 17699 / DSM 428 / KCTC 22496 / NCIMB 10442 / H16 / Stanier 337) (Ralstonia eutropha).